Reading from the N-terminus, the 236-residue chain is Small ribosomal subunit protein uS3 (236 aa).

Residues 39-107 enclose the KH type-2 domain; sequence IREILHKELK…DVVINIVEIR (69 aa). The disordered stretch occupies residues 213 to 236; that stretch reads MAQDKRMNEGGGESSQPRSRRDAA.

The protein belongs to the universal ribosomal protein uS3 family. As to quaternary structure, part of the 30S ribosomal subunit. Forms a tight complex with proteins S10 and S14.

Functionally, binds the lower part of the 30S subunit head. Binds mRNA in the 70S ribosome, positioning it for translation. The polypeptide is Small ribosomal subunit protein uS3 (Bradyrhizobium sp. (strain BTAi1 / ATCC BAA-1182)).